An 879-amino-acid polypeptide reads, in one-letter code: MSDVFNSPQARSTISAAFGIKPTAGQDVEELLIPKVWVPPEDPLASPSRLAKFLRENGYKVLQPRSLPENEEYETDQILPDLAWMRQIEGAVLKPTLSLPIGDQEYFPKYYPTHRPSKEKPNAYPPDIALLKQMIYLFLQVPEANEGLKDEVTLLTQNIRDKAYGSGTYMGQANRLVAMKEVATGRNPNKDPLKLGYTFESIAQLLDITLPVGPPGEDDKPWVPLTRVPSRMLVLTGDVDGDFEVEDYLPKINLKSSSGLPYVGRTKGETIGEMIAISNQFLRELSTLLKQGAGTKGSNKKKLLSMLSDYWYLSCGLLFPKAERYDKSTWLTKTRNIWSAPSPTHLMISMITWPVMSNSPNNVLNIEGCPSLYKFNPFRGGLNRIVEWILAPEEPKALVYADNIYIVHSNTWYSIDLEKGEANCTRQHMQAAMYYILTRGWSDNGDPMFNQTWATFAMNIAPALVVDSSCLIMNLQIKTYGQGSGNAATFINNHLLSTLVLDQWNLMRQPRPDSEEFKSIEDKLGINFKIERSIDDIRGKLRQLVLLAQPGYLSGGVEPEQSSPTVELDLLGWSATYSKDLGIYVPVLDKERLFCSAAYPKGVENKSLKSKVGIEQAYKVVRYEALRLVGGWNYPLLNKACKNNAGAARRHLEAKGFPLDEFLAEWSELSEFGEAFEGFNIKLTVTSESLAELNKPVPPKPPNVNRPVNTGGLKAVSNALKTGRYRNEAGLSGLVLLATARSRLQDAVKAKAEAEKLHKSKPDDPDADWFERSETLSDLLEKADIASKVAHSALVETSDALEAVQSTSVYTPKYPEVKNPQTASNPVVGLHLPAKRATGVQAALLGAGTSRPMGMEAPTRSKNAVKMAKRRQRQKESRQ.

259-266 (GLPYVGRT) is a binding site for GTP. The 201-residue stretch at 398-598 (LVYADNIYIV…DKERLFCSAA (201 aa)) folds into the RdRp catalytic domain. A disordered region spans residues 846–879 (GAGTSRPMGMEAPTRSKNAVKMAKRRQRQKESRQ).

Interacts with VP3 in the cytoplasm. Post-translationally, may exist in multiple phosphorylated forms.

The protein localises to the virion. The catalysed reaction is RNA(n) + a ribonucleoside 5'-triphosphate = RNA(n+1) + diphosphate. Its function is as follows. RNA-dependent RNA polymerase which is found both free and covalently attached to the genomic RNA. May also contain guanylyl and methyl transferase activities. This chain is RNA-directed RNA polymerase (VP1), found in Gallus gallus (Chicken).